The following is a 412-amino-acid chain: Subtilisin-like protease 6 (412 aa).

Residues M1–G20 form the signal peptide. Positions A21–L127 are excised as a propeptide. Residues K36 to T120 enclose the Inhibitor I9 domain. N-linked (GlcNAc...) asparagine glycosylation is found at N123 and N126. The region spanning S135–K412 is the Peptidase S8 domain. Catalysis depends on charge relay system residues D167 and H198. N252 and N264 each carry an N-linked (GlcNAc...) asparagine glycan. The active-site Charge relay system is the S358. N408 is a glycosylation site (N-linked (GlcNAc...) asparagine).

It belongs to the peptidase S8 family.

The protein localises to the secreted. Functionally, secreted subtilisin-like serine protease with keratinolytic activity that contributes to pathogenicity. The polypeptide is Subtilisin-like protease 6 (SUB6) (Trichophyton tonsurans (Scalp ringworm fungus)).